Reading from the N-terminus, the 372-residue chain is Adaptive-response sensory kinase SasA (372 aa).

The Histidine kinase domain maps to Met-147–Gln-360. His-150 carries the phosphohistidine; by autocatalysis modification.

In terms of assembly, homooligomerizes. Interacts with KaiC. Participates in the KaiBC complex, whose core is composed of a KaiC homohexamer and 6 KaiB.

It carries out the reaction ATP + protein L-histidine = ADP + protein N-phospho-L-histidine.. Its function is as follows. Member of the two-component regulatory system SasA/RpaA involved in genome-wide circadian gene expression. One of several clock output pathways. Participates in the Kai clock protein complex, the main circadian regulator in cyanobacteria, via its interaction with KaiC. KaiC enhances the autophosphorylation activity of SasA, which then transfers its phosphate group to RpaA to activate it. In addition to its output function, recruits fold-shifted KaiB (KaiB(fs)) to KaiC to cooperatively form the KaiB(6):KaiC(6) complex (independent of SasA kinase activity). Required for robustness of the circadian rhythm of gene expression and is involved in clock output, also required for adaptation to light/dark cycles. The polypeptide is Adaptive-response sensory kinase SasA (Prochlorococcus marinus (strain AS9601)).